The following is a 339-amino-acid chain: UDP-N-acetylenolpyruvoylglucosamine reductase (339 aa).

The region spanning 19 to 189 is the FAD-binding PCMH-type domain; sequence VDVQARLFAE…LRVRFKLSRV (171 aa). Arg-166 is an active-site residue. Catalysis depends on Ser-239, which acts as the Proton donor. Glu-335 is a catalytic residue.

The protein belongs to the MurB family. Requires FAD as cofactor.

It localises to the cytoplasm. The catalysed reaction is UDP-N-acetyl-alpha-D-muramate + NADP(+) = UDP-N-acetyl-3-O-(1-carboxyvinyl)-alpha-D-glucosamine + NADPH + H(+). It functions in the pathway cell wall biogenesis; peptidoglycan biosynthesis. Cell wall formation. The chain is UDP-N-acetylenolpyruvoylglucosamine reductase from Pseudomonas syringae pv. syringae (strain B728a).